We begin with the raw amino-acid sequence, 312 residues long: DNA-directed RNA polymerase subunit alpha (312 aa).

The interval M1–S226 is alpha N-terminal domain (alpha-NTD). The segment at T243 to K312 is alpha C-terminal domain (alpha-CTD).

The protein belongs to the RNA polymerase alpha chain family. In terms of assembly, homodimer. The RNAP catalytic core consists of 2 alpha, 1 beta, 1 beta' and 1 omega subunit. When a sigma factor is associated with the core the holoenzyme is formed, which can initiate transcription.

It catalyses the reaction RNA(n) + a ribonucleoside 5'-triphosphate = RNA(n+1) + diphosphate. Its function is as follows. DNA-dependent RNA polymerase catalyzes the transcription of DNA into RNA using the four ribonucleoside triphosphates as substrates. This chain is DNA-directed RNA polymerase subunit alpha, found in Lactococcus lactis subsp. cremoris (strain MG1363).